Here is a 450-residue protein sequence, read N- to C-terminus: Plasmepsin VII (450 aa).

An N-terminal signal peptide occupies residues 1 to 24; it reads MNKNIIQIYLFVFILLLKQHIVIL. In terms of domain architecture, Peptidase A1 spans 92–441; that stretch reads YYGEVQIGEQ…DKDNLKIGFV (350 aa). Catalysis depends on residues D111 and D324.

It belongs to the peptidase A1 family.

It is found in the cytoplasm. The sequence is that of Plasmepsin VII from Plasmodium falciparum (isolate NF54).